Here is a 60-residue protein sequence, read N- to C-terminus: Ribosome biogenesis protein Nop10 (60 aa).

Residues 29–60 are disordered; sequence CDGPTENSAPAPFSPEDPYGEYRRRVRRRASE.

The protein belongs to the NOP10 family.

Involved in ribosome biogenesis; more specifically in 18S rRNA pseudouridylation and in cleavage of pre-rRNA. In Halorubrum lacusprofundi (strain ATCC 49239 / DSM 5036 / JCM 8891 / ACAM 34), this protein is Ribosome biogenesis protein Nop10.